The primary structure comprises 66 residues: uncharacterized protein (66 aa).

A helical membrane pass occupies residues 11-31; sequence PFPLLGVWIIVIIIVAVIGLL.

It localises to the membrane. This is an uncharacterized protein from Chenopodium amaranticolor (Quinoa).